We begin with the raw amino-acid sequence, 551 residues long: Glucans biosynthesis protein D (551 aa).

A signal peptide (tat-type signal) is located at residues 1–32; the sequence is MDRRRFIKGSMAMAAVCGTSGIASLFSQAAFA.

The protein belongs to the OpgD/OpgG family. Predicted to be exported by the Tat system. The position of the signal peptide cleavage has not been experimentally proven.

The protein localises to the periplasm. It participates in glycan metabolism; osmoregulated periplasmic glucan (OPG) biosynthesis. Probably involved in the control of the structural glucose backbone of osmoregulated periplasmic glucans (OPGs). The protein is Glucans biosynthesis protein D (mdoD) of Shigella flexneri.